Consider the following 577-residue polypeptide: Scoloptoxin SSD14 (577 aa).

The N-terminal stretch at 1–25 (MGTSYRKLGYVLFLMLGMIVEEGIA) is a signal peptide.

Heterodimer composed of subunits alpha and beta; probably disulfide-linked. Expressed by the venom gland.

It is found in the secreted. Its function is as follows. Dose-dependently induces human platelet aggregation on both plasma rich platelet and washed platelet (max. response at 3.2 ug/mL) and causes hemolysis against mouse and rabbit erythrocytes (35 and 65% respectively at 5 ug/mL). Does not show hemolytic activity against human erythrocytes (even at 100 ug/mL). The sequence is that of Scoloptoxin SSD14 from Scolopendra dehaani (Thai centipede).